The sequence spans 185 residues: Kappa-casein (185 aa).

The N-terminal stretch at 1–20 (MKSFFLVVNILALTLPFLGA) is a signal peptide. O-linked (GalNAc...) threonine glycosylation is present at T143. S161 is modified (phosphoserine; alternate). A glycan (O-linked (GalNAc...) serine; alternate) is linked at S161. T178 carries O-linked (GalNAc...) threonine glycosylation. S179 is modified (phosphoserine).

Belongs to the kappa-casein family. Mammary gland specific. Secreted in milk.

Its subcellular location is the secreted. Functionally, kappa-casein stabilizes micelle formation, preventing casein precipitation in milk. The polypeptide is Kappa-casein (CSN3) (Equus caballus (Horse)).